Consider the following 685-residue polypeptide: DNA ligase (685 aa).

NAD(+)-binding positions include 47–51 (DSEYD), 96–97 (SL), and Glu125. The active-site N6-AMP-lysine intermediate is the Lys127. Positions 148, 185, 304, and 328 each coordinate NAD(+). Residues Cys422, Cys425, Cys440, and Cys446 each contribute to the Zn(2+) site. Residues 605 to 685 (ADAQPLKGQT…ALLALFAANR (81 aa)) enclose the BRCT domain.

The protein belongs to the NAD-dependent DNA ligase family. LigA subfamily. The cofactor is Mg(2+). It depends on Mn(2+) as a cofactor.

The enzyme catalyses NAD(+) + (deoxyribonucleotide)n-3'-hydroxyl + 5'-phospho-(deoxyribonucleotide)m = (deoxyribonucleotide)n+m + AMP + beta-nicotinamide D-nucleotide.. In terms of biological role, DNA ligase that catalyzes the formation of phosphodiester linkages between 5'-phosphoryl and 3'-hydroxyl groups in double-stranded DNA using NAD as a coenzyme and as the energy source for the reaction. It is essential for DNA replication and repair of damaged DNA. The protein is DNA ligase of Shewanella sp. (strain W3-18-1).